Here is a 194-residue protein sequence, read N- to C-terminus: dTTP/UTP pyrophosphatase (194 aa).

Asp-73 (proton acceptor) is an active-site residue.

The protein belongs to the Maf family. YhdE subfamily. Requires a divalent metal cation as cofactor.

It localises to the cytoplasm. It carries out the reaction dTTP + H2O = dTMP + diphosphate + H(+). It catalyses the reaction UTP + H2O = UMP + diphosphate + H(+). Functionally, nucleoside triphosphate pyrophosphatase that hydrolyzes dTTP and UTP. May have a dual role in cell division arrest and in preventing the incorporation of modified nucleotides into cellular nucleic acids. The chain is dTTP/UTP pyrophosphatase from Clostridium botulinum (strain 657 / Type Ba4).